A 333-amino-acid chain; its full sequence is L-lactate dehydrogenase A chain (333 aa).

Residues 30–58 and Arg-100 each bind NAD(+); that span reads GMVGMAAAISILLKDLTDELALVDVMEDK. The substrate site is built by Arg-107, Asn-139, and Arg-170. Residue Asn-139 coordinates NAD(+). Residue His-194 is the Proton acceptor of the active site. Thr-249 contributes to the substrate binding site.

It belongs to the LDH/MDH superfamily. LDH family. Homotetramer.

The protein resides in the cytoplasm. It carries out the reaction (S)-lactate + NAD(+) = pyruvate + NADH + H(+). The protein operates within fermentation; pyruvate fermentation to lactate; (S)-lactate from pyruvate: step 1/1. This Cyprinus carpio (Common carp) protein is L-lactate dehydrogenase A chain (ldha).